Consider the following 346-residue polypeptide: tRNA N6-adenosine threonylcarbamoyltransferase (346 aa).

Residues H117 and H121 each contribute to the Fe cation site. Residues 139–143, D172, G185, D189, and N278 each bind substrate; that span reads QVSGG. D308 contributes to the Fe cation binding site.

It belongs to the KAE1 / TsaD family. The cofactor is Fe(2+).

Its subcellular location is the cytoplasm. The catalysed reaction is L-threonylcarbamoyladenylate + adenosine(37) in tRNA = N(6)-L-threonylcarbamoyladenosine(37) in tRNA + AMP + H(+). In terms of biological role, required for the formation of a threonylcarbamoyl group on adenosine at position 37 (t(6)A37) in tRNAs that read codons beginning with adenine. Is involved in the transfer of the threonylcarbamoyl moiety of threonylcarbamoyl-AMP (TC-AMP) to the N6 group of A37, together with TsaE and TsaB. TsaD likely plays a direct catalytic role in this reaction. The sequence is that of tRNA N6-adenosine threonylcarbamoyltransferase from Lactobacillus delbrueckii subsp. bulgaricus (strain ATCC 11842 / DSM 20081 / BCRC 10696 / JCM 1002 / NBRC 13953 / NCIMB 11778 / NCTC 12712 / WDCM 00102 / Lb 14).